A 580-amino-acid polypeptide reads, in one-letter code: TRAF-type zinc finger domain-containing protein 1 (580 aa).

An N-acetylalanine modification is found at A2. The TRAF-type zinc-finger motif lies at 27 to 103; the sequence is IHEIHCQRNI…DLELSVLKLK (77 aa). The residue at position 190 (S190) is a Phosphoserine. Over residues 197–209 the composition is skewed to polar residues; it reads TTNQRSMTAQFPI. Residues 197–236 form a disordered region; sequence TTNQRSMTAQFPIQNNLLEEQERQERNRSRQTPKERGEDS. Basic and acidic residues predominate over residues 216–235; sequence EQERQERNRSRQTPKERGED. S326, S414, and S429 each carry phosphoserine. The disordered stretch occupies residues 392-580; it reads PATANNHVSE…GAGDAEEEEE (189 aa). Basic and acidic residues predominate over residues 409 to 419; the sequence is QPRETSPELPK. The span at 453–463 shows a compositional bias: low complexity; the sequence is PPNNTTAPPNR. S469 carries the phosphoserine modification.

As to quaternary structure, interacts with MAVS, TICAM1, TRAF1, TRAF2, TRAF3 and TRAF6.

In terms of biological role, negative feedback regulator that controls excessive innate immune responses. Regulates both Toll-like receptor 4 (TLR4) and DDX58/RIG1-like helicases (RLH) pathways. May inhibit the LTR pathway by direct interaction with TRAF6 and attenuation of NF-kappa-B activation. May negatively regulate the RLH pathway downstream from MAVS and upstream of NF-kappa-B and IRF3. In Bos taurus (Bovine), this protein is TRAF-type zinc finger domain-containing protein 1 (TRAFD1).